Here is a 413-residue protein sequence, read N- to C-terminus: Arginine deiminase (413 aa).

The active-site Amidino-cysteine intermediate is cysteine 403.

Belongs to the arginine deiminase family.

It localises to the cytoplasm. It carries out the reaction L-arginine + H2O = L-citrulline + NH4(+). It functions in the pathway amino-acid degradation; L-arginine degradation via ADI pathway; carbamoyl phosphate from L-arginine: step 1/2. This is Arginine deiminase from Clostridium perfringens (strain SM101 / Type A).